A 164-amino-acid polypeptide reads, in one-letter code: Large ribosomal subunit protein uL11 (164 aa).

This sequence belongs to the universal ribosomal protein uL11 family. In terms of assembly, part of the ribosomal stalk of the 50S ribosomal subunit. Interacts with L10 and the large rRNA to form the base of the stalk. L10 forms an elongated spine to which L12 dimers bind in a sequential fashion forming a multimeric L10(L12)X complex.

Forms part of the ribosomal stalk which helps the ribosome interact with GTP-bound translation factors. The polypeptide is Large ribosomal subunit protein uL11 (Pyrococcus horikoshii (strain ATCC 700860 / DSM 12428 / JCM 9974 / NBRC 100139 / OT-3)).